The primary structure comprises 274 residues: NADPH-dependent 7-cyano-7-deazaguanine reductase (274 aa).

Residue Val80 to Ser82 participates in substrate binding. Residue Ser82–Lys83 participates in NADPH binding. The active-site Thioimide intermediate is Cys181. The active-site Proton donor is Asp188. Residue His220–Glu221 coordinates substrate. Residue Arg249–Gly250 coordinates NADPH.

It belongs to the GTP cyclohydrolase I family. QueF type 2 subfamily. In terms of assembly, homodimer.

It localises to the cytoplasm. The catalysed reaction is 7-aminomethyl-7-carbaguanine + 2 NADP(+) = 7-cyano-7-deazaguanine + 2 NADPH + 3 H(+). It functions in the pathway tRNA modification; tRNA-queuosine biosynthesis. Its function is as follows. Catalyzes the NADPH-dependent reduction of 7-cyano-7-deazaguanine (preQ0) to 7-aminomethyl-7-deazaguanine (preQ1). This is NADPH-dependent 7-cyano-7-deazaguanine reductase from Burkholderia thailandensis (strain ATCC 700388 / DSM 13276 / CCUG 48851 / CIP 106301 / E264).